We begin with the raw amino-acid sequence, 153 residues long: Riboflavin synthase (153 aa).

It belongs to the DMRL synthase family.

The catalysed reaction is 2 6,7-dimethyl-8-(1-D-ribityl)lumazine + H(+) = 5-amino-6-(D-ribitylamino)uracil + riboflavin. The protein operates within cofactor biosynthesis; riboflavin biosynthesis; riboflavin from 2-hydroxy-3-oxobutyl phosphate and 5-amino-6-(D-ribitylamino)uracil: step 2/2. The protein is Riboflavin synthase (ribC) of Archaeoglobus fulgidus (strain ATCC 49558 / DSM 4304 / JCM 9628 / NBRC 100126 / VC-16).